The sequence spans 99 residues: Keratinocyte differentiation-associated protein (99 aa).

Residues 1–22 (MKIPVLPAVVLLSLLALHSAQG) form the signal peptide.

Highly expressed in skin, but not detectable in any other tissue examined. Expression restricted to cornified/stratified epithelia and not detected in non-cornified/stratified epithelia.

The protein localises to the secreted. Functionally, may act as a soluble regulator of keratinocyte differentiation. May play an important role in embryonic skin morphogenesis. This chain is Keratinocyte differentiation-associated protein, found in Canis lupus familiaris (Dog).